Reading from the N-terminus, the 266-residue chain is Anamorsin homolog (266 aa).

Residues 1 to 164 form an N-terminal SAM-like domain region; the sequence is MIINFVGNTL…NITAENPDFL (164 aa). The tract at residues 165–185 is linker; it reads SNEDNDVSSDDEDLYNNEDDK. Residues C229, C232, C240, and C243 each contribute to the [4Fe-4S] cluster site. 2 short sequence motifs (cx2C motif) span residues 229–232 and 240–243; these read CGNC and CASC. The tract at residues 229–243 is fe-S binding site B; it reads CGNCYLGDAFRCASC.

The protein belongs to the anamorsin family. Monomer. It depends on [4Fe-4S] cluster as a cofactor.

The protein resides in the cytoplasm. Its subcellular location is the mitochondrion intermembrane space. Its function is as follows. Component of the cytosolic iron-sulfur (Fe-S) protein assembly (CIA) machinery. Required for the maturation of extramitochondrial Fe-S proteins. Part of an electron transfer chain functioning in an early step of cytosolic Fe-S biogenesis, facilitating the de novo assembly of a [4Fe-4S] cluster on the cytosolic Fe-S scaffold complex. Electrons are transferred from NADPH via a FAD- and FMN-containing diflavin oxidoreductase. Together with the diflavin oxidoreductase, also required for the assembly of the diferric tyrosyl radical cofactor of ribonucleotide reductase (RNR), probably by providing electrons for reduction during radical cofactor maturation in the catalytic small subunit. This chain is Anamorsin homolog, found in Plasmodium falciparum (isolate 3D7).